The sequence spans 163 residues: 2-C-methyl-D-erythritol 2,4-cyclodiphosphate synthase (163 aa).

The a divalent metal cation site is built by Asp8 and His10. 4-CDP-2-C-methyl-D-erythritol 2-phosphate is bound by residues 8–10 (DVH) and 34–35 (HS). A divalent metal cation is bound at residue His42. 4-CDP-2-C-methyl-D-erythritol 2-phosphate contacts are provided by residues 56–58 (DIG), 132–135 (TTTE), Phe139, and Arg142.

This sequence belongs to the IspF family. Homotrimer. Requires a divalent metal cation as cofactor.

It catalyses the reaction 4-CDP-2-C-methyl-D-erythritol 2-phosphate = 2-C-methyl-D-erythritol 2,4-cyclic diphosphate + CMP. The protein operates within isoprenoid biosynthesis; isopentenyl diphosphate biosynthesis via DXP pathway; isopentenyl diphosphate from 1-deoxy-D-xylulose 5-phosphate: step 4/6. Involved in the biosynthesis of isopentenyl diphosphate (IPP) and dimethylallyl diphosphate (DMAPP), two major building blocks of isoprenoid compounds. Catalyzes the conversion of 4-diphosphocytidyl-2-C-methyl-D-erythritol 2-phosphate (CDP-ME2P) to 2-C-methyl-D-erythritol 2,4-cyclodiphosphate (ME-CPP) with a corresponding release of cytidine 5-monophosphate (CMP). This Moorella thermoacetica (strain ATCC 39073 / JCM 9320) protein is 2-C-methyl-D-erythritol 2,4-cyclodiphosphate synthase.